The chain runs to 245 residues: MKEYFSVKMRASLQGRHVSGAERIVLKEDLPTVISQLSQRPKEYDSLNIKVEKINDLNYIEKSLNVKTINVKDWIEGNKVAVEILQNQGVDKKIAEKYINLIHQGAVNGENMRGAMIVNLSGERVEKDKTRGIRTVNIDFEDRKAITELLKEKGYTERTVDALALATKTLNHPDIVAEYCISDDPSYTTGYVATKTTYYRINPLKQLSNEKGGRIYFVKDTANIEDIYQYLESEAFLIKQLGDLQ.

This sequence belongs to the BioW family. Homodimer. The cofactor is Mg(2+).

The enzyme catalyses heptanedioate + ATP + CoA = 6-carboxyhexanoyl-CoA + AMP + diphosphate. The protein operates within metabolic intermediate metabolism; pimeloyl-CoA biosynthesis; pimeloyl-CoA from pimelate: step 1/1. Functionally, catalyzes the transformation of pimelate into pimeloyl-CoA with concomitant hydrolysis of ATP to AMP. The chain is 6-carboxyhexanoate--CoA ligase from Sulfurihydrogenibium azorense (strain DSM 15241 / OCM 825 / Az-Fu1).